The sequence spans 85 residues: MNQAIQFPDREEWDENKKCVCFPALVNGMQLTCAISGESLAYRFTGDTPEQWLASFRQHRWDLEEEADNLIQEQSEDDQGWVWLP.

This is an uncharacterized protein from Shigella flexneri.